Here is a 278-residue protein sequence, read N- to C-terminus: NADPH-dependent 7-cyano-7-deazaguanine reductase (278 aa).

87–89 (IES) serves as a coordination point for substrate. 89–90 (SK) contacts NADPH. Cys-185 (thioimide intermediate) is an active-site residue. Asp-192 functions as the Proton donor in the catalytic mechanism. Substrate is bound at residue 224–225 (HE). 253 to 254 (RG) serves as a coordination point for NADPH. Residues 255–278 (GLDINPYRSTNPTFSVQNHRSFRQ) form a disordered region. Residues 261–278 (YRSTNPTFSVQNHRSFRQ) are compositionally biased toward polar residues.

Belongs to the GTP cyclohydrolase I family. QueF type 2 subfamily. In terms of assembly, homodimer.

The protein localises to the cytoplasm. It catalyses the reaction 7-aminomethyl-7-carbaguanine + 2 NADP(+) = 7-cyano-7-deazaguanine + 2 NADPH + 3 H(+). The protein operates within tRNA modification; tRNA-queuosine biosynthesis. Catalyzes the NADPH-dependent reduction of 7-cyano-7-deazaguanine (preQ0) to 7-aminomethyl-7-deazaguanine (preQ1). This is NADPH-dependent 7-cyano-7-deazaguanine reductase from Coxiella burnetii (strain CbuG_Q212) (Coxiella burnetii (strain Q212)).